Here is a 165-residue protein sequence, read N- to C-terminus: Growth arrest and DNA damage-inducible protein GADD45 alpha (165 aa).

Thr-2 is subject to Phosphothreonine.

It belongs to the GADD45 family. As to quaternary structure, interacts with AURKA, PCNA, GADD45GIP1 and MAPK14.

Its subcellular location is the nucleus. In terms of biological role, might affect PCNA interaction with some CDK (cell division protein kinase) complexes; stimulates DNA excision repair in vitro and inhibits entry of cells into S phase. In T-cells, functions as a regulator of p38 MAPKs by inhibiting p88 phosphorylation and activity. In Cricetulus griseus (Chinese hamster), this protein is Growth arrest and DNA damage-inducible protein GADD45 alpha (GADD45A).